A 764-amino-acid chain; its full sequence is Phenylalanine--tRNA ligase beta subunit (764 aa).

A tRNA-binding domain is found at 38-148 (CIAPKNVVVG…GELVLGKELN (111 aa)). The B5 domain maps to 375 to 455 (LKDRTLTFQL…RFVGIDNLVS (81 aa)). D433, D439, E442, and E443 together coordinate Mg(2+). The FDX-ACB domain occupies 673–763 (SIYPSSVRDL…LEKEFNARLK (91 aa)).

The protein belongs to the phenylalanyl-tRNA synthetase beta subunit family. Type 1 subfamily. Tetramer of two alpha and two beta subunits. Mg(2+) serves as cofactor.

The protein resides in the cytoplasm. The enzyme catalyses tRNA(Phe) + L-phenylalanine + ATP = L-phenylalanyl-tRNA(Phe) + AMP + diphosphate + H(+). This is Phenylalanine--tRNA ligase beta subunit (pheT) from Helicobacter pylori (strain ATCC 700392 / 26695) (Campylobacter pylori).